The following is a 312-amino-acid chain: Ribonuclease Z (312 aa).

Residues His-62, His-64, Asp-66, His-67, His-144, Asp-215, and His-273 each coordinate Zn(2+). Catalysis depends on Asp-66, which acts as the Proton acceptor.

This sequence belongs to the RNase Z family. In terms of assembly, homodimer. Zn(2+) is required as a cofactor.

It carries out the reaction Endonucleolytic cleavage of RNA, removing extra 3' nucleotides from tRNA precursor, generating 3' termini of tRNAs. A 3'-hydroxy group is left at the tRNA terminus and a 5'-phosphoryl group is left at the trailer molecule.. Functionally, zinc phosphodiesterase, which displays some tRNA 3'-processing endonuclease activity. Probably involved in tRNA maturation, by removing a 3'-trailer from precursor tRNA. This is Ribonuclease Z from Prochlorococcus marinus (strain MIT 9215).